Here is a 365-residue protein sequence, read N- to C-terminus: N-glycosylase/DNA lyase OGG1 (365 aa).

The segment covering 1-16 has biased composition (polar residues); the sequence is MKRPRPTSQPSISSTV. Positions 1 to 24 are disordered; the sequence is MKRPRPTSQPSISSTVKPPLSPPV. Positions 162, 167, and 215 each coordinate DNA. Catalysis depends on Lys261, which acts as the Schiff-base intermediate with DNA. 8-oxoguanine contacts are provided by Pro278 and Asp280. Residue His282 coordinates DNA. 8-oxoguanine is bound by residues Gln324 and Phe328.

Belongs to the type-1 OGG1 family. As to expression, expressed in stems, roots, rosette and cauline leaves, flowers and seeds.

The protein localises to the nucleus. It carries out the reaction 2'-deoxyribonucleotide-(2'-deoxyribose 5'-phosphate)-2'-deoxyribonucleotide-DNA = a 3'-end 2'-deoxyribonucleotide-(2,3-dehydro-2,3-deoxyribose 5'-phosphate)-DNA + a 5'-end 5'-phospho-2'-deoxyribonucleoside-DNA + H(+). Its function is as follows. Involved in repair of DNA damaged by oxidation by incising DNA at 8-oxoG residues. Excises 7,8-dihydro-8-oxoguanine and 2,6-diamino-4-hydroxy-5-N-methylformamidopyrimidine (Fapy) from damaged DNA. Has a beta-lyase activity that nicks DNA 3' to the lesion. The polypeptide is N-glycosylase/DNA lyase OGG1 (OGG1) (Arabidopsis thaliana (Mouse-ear cress)).